Here is a 124-residue protein sequence, read N- to C-terminus: CLAVATA3/ESR (CLE)-related protein 45 (124 aa).

The N-terminal stretch at 1 to 20 (MLGSSTRSMFFLLVCIGLLA) is a signal peptide. 2 N-linked (GlcNAc...) asparagine glycosylation sites follow: N25 and N96. The stretch at 71 to 109 (LNKNRRVLEEVNKDKIKAEETQERKNKTEDSFKSSKRRV) forms a coiled coil. Positions 87–103 (KAEETQERKNKTEDSFK) are enriched in basic and acidic residues. The segment at 87 to 124 (KAEETQERKNKTEDSFKSSKRRVRRGSDPIHNKAQPFS) is disordered.

The protein belongs to the CLV3/ESR signal peptide family. As to quaternary structure, binds to SKM1 present in the pollen grain, particularly under relatively high temperature (at 30 degrees Celsius). Interacts with BAM3, especially in roots. As to expression, expressed at low levels in flowers, especially in pistils. Present in vascular tissues. In roots, confined to protophloem and sieve element precursor cells.

It localises to the secreted. The protein localises to the extracellular space. Its function is as follows. Extracellular signal peptide that regulates cell fate. Represses root apical meristem maintenance. Represses protophloem differentiation in a BAM3-dependent manner. BRX, BAM3, and CLE45 act together to regulate the transition of protophloem cells from proliferation to differentiation, thus impinging on postembryonic growth capacity of the root meristem; this signaling pathway requires CRN and CLV2 and involves MAKR5 for its transduction/amplification. Triggers the accumulation of MAKR5 in developing sieve elements in a BAM3-dependent manner. Prevents, in a dose-dependent manner, auxin response in the root meristem thus leading in the repression of protophloem differentiation and periclinal sieve element precursor cell division. Promotes pollen tube growth prolongation in a SKM1 and SKM2-dependent manner, especially under relatively high temperature (at 30 degrees Celsius), thus conferring tolerance against high temperature probably through the maintenance of mitochondrial activity. Alleviates mitochondrial decay pollen tube in vitro culture. The sequence is that of CLAVATA3/ESR (CLE)-related protein 45 from Arabidopsis thaliana (Mouse-ear cress).